Consider the following 339-residue polypeptide: Annexin A2 (339 aa).

Ser-2 bears the N-acetylserine mark. Positions 2–24 (STVHEILSKLSLEGDHSLPPSAY) are S100A10-binding site. Tyr-24 is modified (phosphotyrosine; by SRC). Phosphothreonine; by PKC is present on Thr-26. 4 Annexin repeats span residues 33–104 (FDAD…GLLK), 105–176 (TPSQ…ALAK), 189–261 (ELID…NLVQ), and 265–336 (NKQL…NLCG).

Belongs to the annexin family. As to quaternary structure, heterotetramer containing 2 light chains of S100A10/p11 and 2 heavy chains of ANXA2/p36.

The protein localises to the secreted. The protein resides in the extracellular space. It localises to the extracellular matrix. Its subcellular location is the basement membrane. In terms of biological role, calcium-regulated membrane-binding protein whose affinity for calcium is greatly enhanced by anionic phospholipids. It binds two calcium ions with high affinity. In Gallus gallus (Chicken), this protein is Annexin A2 (ANXA2).